Consider the following 86-residue polypeptide: uncharacterized protein (86 aa).

4Fe-4S ferredoxin-type domains lie at 1–29 (MALL…IGDE) and 31–65 (YVID…PDPE). [4Fe-4S] cluster is bound by residues Cys-9, Cys-12, Cys-15, Cys-19, Cys-38, Cys-41, Cys-50, and Cys-54.

The cofactor is [4Fe-4S] cluster.

This is an uncharacterized protein from Haemophilus influenzae (strain ATCC 51907 / DSM 11121 / KW20 / Rd).